Reading from the N-terminus, the 201-residue chain is Probable GTP-binding protein EngB (201 aa).

Positions 22-195 (SLPEIAFCGR…MEQLEMILKY (174 aa)) constitute an EngB-type G domain. GTP contacts are provided by residues 30-37 (GRSNVGKS), 57-61 (GKTRT), 75-78 (DLPG), 142-145 (TKLD), and 174-176 (YSS). 2 residues coordinate Mg(2+): Ser-37 and Thr-59.

This sequence belongs to the TRAFAC class TrmE-Era-EngA-EngB-Septin-like GTPase superfamily. EngB GTPase family. Mg(2+) serves as cofactor.

Its function is as follows. Necessary for normal cell division and for the maintenance of normal septation. The sequence is that of Probable GTP-binding protein EngB from Finegoldia magna (strain ATCC 29328 / DSM 20472 / WAL 2508) (Peptostreptococcus magnus).